A 61-amino-acid chain; its full sequence is Double gene block protein 1 (61 aa).

The disordered stretch occupies residues 1-45; sequence MDIESEVPVVGKQMLAGNRGKQKTRRSVAKDAIRKPASDSTNGGN. An RNA-binding region spans residues 17-35; sequence GNRGKQKTRRSVAKDAIRK. A compositionally biased stretch (basic and acidic residues) spans 28-37; it reads VAKDAIRKPA.

The protein belongs to the carmovirus double gene block protein 1 family. As to quaternary structure, homodimer.

Functionally, cell-to-cell movement. Displays RNA-binding activity. The protein is Double gene block protein 1 of Carnation mottle virus (CarMV).